A 109-amino-acid chain; its full sequence is Nucleoid-associated protein Caul_4574 (109 aa).

The protein belongs to the YbaB/EbfC family. Homodimer.

Its subcellular location is the cytoplasm. It localises to the nucleoid. Its function is as follows. Binds to DNA and alters its conformation. May be involved in regulation of gene expression, nucleoid organization and DNA protection. The protein is Nucleoid-associated protein Caul_4574 of Caulobacter sp. (strain K31).